The primary structure comprises 178 residues: Glucagon-1 (178 aa).

Positions 1 to 21 (MFGIHSLAGVLLLVIVQRQLA) are cleaved as a signal peptide. 3 propeptides span residues 83-87 (SGAPS), 123-134 (ESAEESRNGPMS), and 171-178 (SNKRQEDH).

The protein belongs to the glucagon family.

The protein localises to the secreted. In terms of biological role, promotes hydrolysis of glycogen and lipids, and raises the blood sugar level. The polypeptide is Glucagon-1 (gcg1) (Oncorhynchus mykiss (Rainbow trout)).